The primary structure comprises 307 residues: Methionyl-tRNA formyltransferase (307 aa).

108–111 (SLLP) is a (6S)-5,6,7,8-tetrahydrofolate binding site.

Belongs to the Fmt family.

The enzyme catalyses L-methionyl-tRNA(fMet) + (6R)-10-formyltetrahydrofolate = N-formyl-L-methionyl-tRNA(fMet) + (6S)-5,6,7,8-tetrahydrofolate + H(+). Attaches a formyl group to the free amino group of methionyl-tRNA(fMet). The formyl group appears to play a dual role in the initiator identity of N-formylmethionyl-tRNA by promoting its recognition by IF2 and preventing the misappropriation of this tRNA by the elongation apparatus. This is Methionyl-tRNA formyltransferase from Renibacterium salmoninarum (strain ATCC 33209 / DSM 20767 / JCM 11484 / NBRC 15589 / NCIMB 2235).